The sequence spans 542 residues: Adenine deaminase (542 aa).

It belongs to the metallo-dependent hydrolases superfamily. Adenine deaminase family. The cofactor is Mn(2+).

It carries out the reaction adenine + H2O + H(+) = hypoxanthine + NH4(+). The polypeptide is Adenine deaminase (Methanosphaera stadtmanae (strain ATCC 43021 / DSM 3091 / JCM 11832 / MCB-3)).